The sequence spans 105 residues: Small ribosomal subunit protein uS10 (105 aa).

The protein belongs to the universal ribosomal protein uS10 family. As to quaternary structure, part of the 30S ribosomal subunit.

In terms of biological role, involved in the binding of tRNA to the ribosomes. The protein is Small ribosomal subunit protein uS10 of Synechococcus sp. (strain JA-2-3B'a(2-13)) (Cyanobacteria bacterium Yellowstone B-Prime).